The sequence spans 95 residues: FXYD domain-containing ion transport regulator 6 (95 aa).

The first 18 residues, 1–18 (MEVVLLFLCGLLAPAVLA), serve as a signal peptide directing secretion. At 19–35 (SATEQEKEKDPFHYDYQ) the chain is on the extracellular side. Residues 36-58 (TLRIGGLVFAVVLFSVGILLILS) form a helical membrane-spanning segment. The Cytoplasmic segment spans residues 59-95 (RRCKCSFNQKPRAPGDEEAQVENLVTANATEPQKAEN). The segment at 69-95 (PRAPGDEEAQVENLVTANATEPQKAEN) is disordered.

Belongs to the FXYD family. As to quaternary structure, regulatory subunit of the sodium/potassium-transporting ATPase which is composed of a catalytic alpha subunit, a non-catalytic beta subunit and an additional regulatory subunit. The regulatory subunit, a member of the FXYD protein family, modulates the enzymatic activity in a tissue- and isoform-specific way by changing affinities of the Na+/K+-ATPase toward Na(+), K(+) or ATP.

It localises to the cell membrane. Its function is as follows. Associates with and regulates the activity of the sodium/potassium-transporting ATPase (NKA) which catalyzes the hydrolysis of ATP coupled with the exchange of Na(+) and K(+) ions across the plasma membrane. Reduces the apparent affinity for intracellular Na(+) with no change in the apparent affinity for extracellular K(+). In addition to modulating NKA kinetics, may also function as a regulator of NKA localization to the plasma membrane. The chain is FXYD domain-containing ion transport regulator 6 (FXYD6) from Bos taurus (Bovine).